The primary structure comprises 209 residues: NAD(P)H dehydrogenase (quinone) (209 aa).

The region spanning 4–199 is the Flavodoxin-like domain; sequence VNIIFYSMYG…AMARYQGRHV (196 aa). FMN-binding positions include 10 to 15 and 87 to 89; these read SMYGHV and TRY. An NAD(+)-binding site is contributed by Tyr12. Trp107 is a binding site for substrate. Residues 122–128 and His143 each bind FMN; that span reads SSGTQHG.

Belongs to the WrbA family. FMN is required as a cofactor.

It carries out the reaction a quinone + NADH + H(+) = a quinol + NAD(+). The enzyme catalyses a quinone + NADPH + H(+) = a quinol + NADP(+). This is NAD(P)H dehydrogenase (quinone) from Methanosarcina acetivorans (strain ATCC 35395 / DSM 2834 / JCM 12185 / C2A).